Reading from the N-terminus, the 356-residue chain is Uroporphyrinogen decarboxylase (356 aa).

Residues 27–31 (RQAGR), aspartate 77, tyrosine 154, threonine 209, and histidine 327 each bind substrate.

Belongs to the uroporphyrinogen decarboxylase family. In terms of assembly, homodimer.

It is found in the cytoplasm. It carries out the reaction uroporphyrinogen III + 4 H(+) = coproporphyrinogen III + 4 CO2. It functions in the pathway porphyrin-containing compound metabolism; protoporphyrin-IX biosynthesis; coproporphyrinogen-III from 5-aminolevulinate: step 4/4. Catalyzes the decarboxylation of four acetate groups of uroporphyrinogen-III to yield coproporphyrinogen-III. The polypeptide is Uroporphyrinogen decarboxylase (Cellvibrio japonicus (strain Ueda107) (Pseudomonas fluorescens subsp. cellulosa)).